The primary structure comprises 431 residues: Glutamate--tRNA ligase 1 (431 aa).

Positions 11–21 (PSPTGDLHLGG) match the 'HIGH' region motif. A 'KMSKS' region motif is present at residues 203–207 (KLSKR). K206 is an ATP binding site.

It belongs to the class-I aminoacyl-tRNA synthetase family. Glutamate--tRNA ligase type 1 subfamily. Monomer.

The protein resides in the cytoplasm. The catalysed reaction is tRNA(Glu) + L-glutamate + ATP = L-glutamyl-tRNA(Glu) + AMP + diphosphate. Functionally, catalyzes the attachment of glutamate to tRNA(Glu) in a two-step reaction: glutamate is first activated by ATP to form Glu-AMP and then transferred to the acceptor end of tRNA(Glu). The chain is Glutamate--tRNA ligase 1 from Rubrobacter xylanophilus (strain DSM 9941 / JCM 11954 / NBRC 16129 / PRD-1).